Reading from the N-terminus, the 357-residue chain is Queuosine-tRNA galactosyltransferase (357 aa).

It belongs to the glycosyltransferase 2 family.

The protein resides in the cytoplasm. It catalyses the reaction queuosine(34) in tRNA(Tyr) + UDP-alpha-D-galactose = O-5''-beta-D-galactosylqueuosine(34) in tRNA(Tyr) + UDP + H(+). Functionally, glycosyltransferase that specifically catalyzes galactosylation of cytoplasmic tRNA(Tyr) modified with queuosine at position 34 (queuosine(34)). Galactosylates the cyclopentene hydroxyl group of queuosine(34) in tRNA(Tyr) to form galactosyl-queuosine(34). Mannosylation of queuosine(34) in tRNA(Tyr) is required to slow-down elongation at cognate codons UAC and suppress stop codon readthrough, thereby regulating protein translation. This Rattus norvegicus (Rat) protein is Queuosine-tRNA galactosyltransferase.